The chain runs to 76 residues: cAMP-dependent protein kinase inhibitor alpha (76 aa).

Residue Thr-2 is modified to Blocked amino end (Thr). The disordered stretch occupies residues 49–76; the sequence is KAEGEGDAQRNPSEQTGEAQGEAAKQES.

The protein belongs to the PKI family.

Extremely potent competitive inhibitor of cAMP-dependent protein kinase activity, this protein interacts with the catalytic subunit of the enzyme after the cAMP-induced dissociation of its regulatory chains. This Gallus gallus (Chicken) protein is cAMP-dependent protein kinase inhibitor alpha (PKIA).